The primary structure comprises 100 residues: MANNMKSATFCKATWAIFLVALAILVQLKGSEAQAGGCASQLGNLNVCAPYVVPGAVNTNPSQECCAALSGVNHDCMCNTLRVASQLPSSCNLAALNCGN.

A signal peptide spans 1–33 (MANNMKSATFCKATWAIFLVALAILVQLKGSEA). 4 cysteine pairs are disulfide-bonded: cysteine 38-cysteine 76, cysteine 48-cysteine 65, cysteine 66-cysteine 91, and cysteine 78-cysteine 98.

This sequence belongs to the A9/FIL1 family.

It is found in the secreted. The protein is Protein MEN-8 (MEN-8) of Silene latifolia (White campion).